The primary structure comprises 287 residues: Phosphatidylglycerol--prolipoprotein diacylglyceryl transferase (287 aa).

The next 4 membrane-spanning stretches (helical) occupy residues I15–I35, F55–E75, I90–V110, and V117–G137. R138 lines the a 1,2-diacyl-sn-glycero-3-phospho-(1'-sn-glycerol) pocket. Transmembrane regions (helical) follow at residues H180–L200 and I238–I258.

This sequence belongs to the Lgt family.

The protein localises to the cell membrane. The catalysed reaction is L-cysteinyl-[prolipoprotein] + a 1,2-diacyl-sn-glycero-3-phospho-(1'-sn-glycerol) = an S-1,2-diacyl-sn-glyceryl-L-cysteinyl-[prolipoprotein] + sn-glycerol 1-phosphate + H(+). Its pathway is protein modification; lipoprotein biosynthesis (diacylglyceryl transfer). Its function is as follows. Catalyzes the transfer of the diacylglyceryl group from phosphatidylglycerol to the sulfhydryl group of the N-terminal cysteine of a prolipoprotein, the first step in the formation of mature lipoproteins. In Oceanobacillus iheyensis (strain DSM 14371 / CIP 107618 / JCM 11309 / KCTC 3954 / HTE831), this protein is Phosphatidylglycerol--prolipoprotein diacylglyceryl transferase.